A 636-amino-acid chain; its full sequence is DNA-directed RNA polymerase subunit gamma (636 aa).

Residues Cys71, Cys73, Cys86, and Cys89 each contribute to the Zn(2+) site. The Mg(2+) site is built by Asp467, Asp469, and Asp471.

Belongs to the RNA polymerase beta' chain family. RpoC1 subfamily. As to quaternary structure, in cyanobacteria the RNAP catalytic core is composed of 2 alpha, 1 beta, 1 beta', 1 gamma and 1 omega subunit. When a sigma factor is associated with the core the holoenzyme is formed, which can initiate transcription. Requires Mg(2+) as cofactor. Zn(2+) is required as a cofactor.

It catalyses the reaction RNA(n) + a ribonucleoside 5'-triphosphate = RNA(n+1) + diphosphate. In terms of biological role, DNA-dependent RNA polymerase catalyzes the transcription of DNA into RNA using the four ribonucleoside triphosphates as substrates. This chain is DNA-directed RNA polymerase subunit gamma, found in Picosynechococcus sp. (strain ATCC 27264 / PCC 7002 / PR-6) (Agmenellum quadruplicatum).